We begin with the raw amino-acid sequence, 159 residues long: Large ribosomal subunit protein mL50 (159 aa).

The protein belongs to the mitochondrion-specific ribosomal protein mL50 family. Component of the mitochondrial ribosome large subunit (39S) which comprises a 16S rRNA and about 50 distinct proteins.

It localises to the mitochondrion. In Bos taurus (Bovine), this protein is Large ribosomal subunit protein mL50 (MRPL50).